The chain runs to 418 residues: MRVWVPVGVLTSLAYCFHQRRVALAEQRAPNGQRPVDRNLLELKMVQVVFRHGARSPLKPLPLEEQVEWNPKLLEIPPQTRFDYTVTNLAGGPKPHSHYDTEYRKTTLRGGVLAGQLTKVGMQQMFALGEKLRKNYVEDIPFLSPVYNPQEVFIRSTNMFRNLESTRCLLAGLFQHQKGSAVIHTDEASSEVLYPNYQSCWVLKEKTRGRKKAAISQPGISEDLEKVKTGVGINNGDDVDFFVLLDNVAAEQVHSLLNCPALERFAQLIEQRAVDMALYVVEQEDRESIQMAVGPFLHILEGNLLKTVDPTTAPSKTRKMYLYATHDVTLLPMLLALGIFDQKWPPFAVDLTMELYQHQESKEWFVQLFYNGKEQVPRGCPDKLCPLDKFLNTMSVYSVSPEKYRTLCSKTRIVELGE.

The transit peptide at 1–25 (MRVWVPVGVLTSLAYCFHQRRVALA) directs the protein to the mitochondrion. The tract at residues 51 to 161 (RHGARSPLKP…VFIRSTNMFR (111 aa)) is substrate binding. Residue His-52 is the Nucleophile of the active site. Asp-327 functions as the Proton donor in the catalytic mechanism.

The protein belongs to the histidine acid phosphatase family. Monomer.

It is found in the mitochondrion. The catalysed reaction is a phosphate monoester + H2O = an alcohol + phosphate. It carries out the reaction 1-(9Z-octadecenoyl)-sn-glycero-3-phosphate + H2O = 1-(9Z-octadecenoyl)-sn-glycerol + phosphate. Its function is as follows. Hydrolyzes lysophosphatidic acid (LPA) containing a medium length fatty acid chain to the corresponding monoacylglycerol. Has highest activity with lysophosphatidic acid containing myristate (C14:0), monounsaturated oleate (C18:1) or palmitate (C16:0), and lower activity with C18:0 and C6:0 lysophosphatidic acid. In Mus musculus (Mouse), this protein is Lysophosphatidic acid phosphatase type 6 (Acp6).